The primary structure comprises 84 residues: MNYLVMISFALLLMTGVESVRDAYIAKPHNCVYECARNEYCNDLCTKNGAKSGYCQWVGKYGNGCWCIELPDNVPIRVPGKCHR.

The signal sequence occupies residues Met-1–Ser-19. Residues Arg-21–His-83 enclose the LCN-type CS-alpha/beta domain. Cystine bridges form between Cys-31–Cys-82, Cys-35–Cys-55, Cys-41–Cys-65, and Cys-45–Cys-67. Arg-84 is a propeptide (removed by a carboxypeptidase).

This sequence belongs to the long (4 C-C) scorpion toxin superfamily. Sodium channel inhibitor family. Alpha subfamily. As to expression, expressed by the venom gland.

It is found in the secreted. In terms of biological role, alpha toxins bind voltage-independently at site-3 of sodium channels (Nav) and inhibit the inactivation of the activated channels thereby blocking neuronal transmission. This toxin is active against both mammals and insects, and is classified as an alpha-like toxin. It is active on Nav1.2/SCN2A (EC(50)=139-252 nM), Nav1.3/SCN3A (EC(50)=565 nM), Nav1.4/SCN4A and Nav1.5/SCN5A (EC(50)=195-500 nM), Nav1.6/SCN8A (EC(50)=214 nM), and drosophila DmNav1 (EC(50)=30 nM). In mNav1.6/SCN8A, the toxin induces a large increase in both transient and persistent currents, which correlates with a prominent reduction in the fast component of inactivating current. In rNav1.2/SCN2A and rNav1.3/SCN3A, toxin-increased currents is much smaller. Moreover, the toxin only accelerates the slow inactivation development and delay recovery of mNav1.6/SCN8A through binding to the channel in the open state. Is 6-fold more toxic than BmK-M2. In vivo, intrahippocampal injection into rat induces epileptiform responses. In addition, intraplantar injection into rat induces spontaneous nociception and hyperalgesia. The polypeptide is Alpha-like toxin BmK M1 (Olivierus martensii (Manchurian scorpion)).